Reading from the N-terminus, the 774-residue chain is Potassium/sodium hyperpolarization-activated cyclic nucleotide-gated channel 3 (774 aa).

Positions 1 to 48 are disordered; the sequence is MEAEQRPAAGASEGATPGLEAVPPVAPPPATAASGPIPKSGPEPKRRH. At 1 to 97 the chain is on the cytoplasmic side; the sequence is MEAEQRPAAG…PYSDFRFYWD (97 aa). An involved in subunit assembly region spans residues 46–91; sequence RRHLGTLLQPTVNKFSLRVFGSHKAVEIEQERVKSAGAWIIHPYSD. Residues 98 to 118 traverse the membrane as a helical segment; the sequence is LIMLLLMVGNLIVLPVGITFF. Residues 119 to 124 are Extracellular-facing; sequence KEENSP. Residues 125 to 145 traverse the membrane as a helical segment; that stretch reads PWIVFNVLSDTFFLLDLVLNF. The Cytoplasmic segment spans residues 146–171; sequence RTGIVVEEGAEILLAPRAIRTRYLRT. Residues 172–192 form a helical membrane-spanning segment; the sequence is WFLVDLISSIPVDYIFLVVEL. The Extracellular segment spans residues 193–201; the sequence is EPRLDAEVY. Residues 202-222 traverse the membrane as a helical; Voltage-sensor segment; it reads KTARALRIVRFTKILSLLRLL. At 223–253 the chain is on the cytoplasmic side; it reads RLSRLIRYIHQWEEIFHMTYDLASAVVRIFN. Residues 254–274 traverse the membrane as a helical segment; it reads LIGMMLLLCHWDGCLQFLVPM. The Extracellular segment spans residues 275-297; sequence LQDFPPDCWVSINHMVNHSWGRQ. Asn-291 carries an N-linked (GlcNAc...) asparagine glycan. The pore-forming intramembrane region spans 298 to 319; the sequence is YSHALFKAMSHMLCIGYGQQAP. Over 320 to 329 the chain is Extracellular; that stretch reads VGMPDVWLTM. Residues 330–350 form a helical membrane-spanning segment; the sequence is LSMIVGATCYAMFIGHATALI. The Cytoplasmic portion of the chain corresponds to 351–774; that stretch reads QSLDSSRRQY…PRGLQLSANM (424 aa). Residues 354–774 are interaction with KCTD3; sequence DSSRRQYQEK…PRGLQLSANM (421 aa). 3',5'-cyclic AMP contacts are provided by Gly-492, Glu-493, Cys-495, Arg-502, Thr-503, Arg-543, and Arg-546. Ser-634 bears the Phosphoserine mark. Positions 682-774 are disordered; sequence SLSRAGRSQV…PRGLQLSANM (93 aa). Over residues 751–763 the composition is skewed to pro residues; that stretch reads TAQPPRPPVPEPA.

Belongs to the potassium channel HCN family. In terms of assembly, homotetramer. The potassium channel is composed of a homo- or heterotetrameric complex of pore-forming subunits. Interacts with HCN11. Interacts with KCTD3; this interaction increases cell surface expression and current density of this channel. Interacts with PEX5L. In terms of tissue distribution, detected in brain.

Its subcellular location is the cell membrane. The enzyme catalyses K(+)(in) = K(+)(out). It catalyses the reaction Na(+)(in) = Na(+)(out). Its activity is regulated as follows. Unlike HCN2 and HCN4, HCN3 is insensitive to cyclic nucleotides, such as cAMP or cGMP. This lack of sensitivity of HCN3, despite harboring a functional cyclic nucleotide-binding domain (CNBD), may be explained by its shorter C-terminal sequence, which may alter the normal autoinhibition of the channel. Inhibited by Cs(1+) and ZD7288. Phosphatidylinositol-4,5-bisphosphate (PIP(2)) shifts HCN3 activation to more depolarized potentials and accelerated activation kinetics. Its function is as follows. Hyperpolarization-activated ion channel that are permeable to sodium and potassium ions, with an about 3:1 preference for potassium ions. Contributes to the native pacemaker currents in heart (If) and in neurons (Ih). In particular, plays a pivotal role in maintaining excitability and promoting rhythmic burst firing within hypothalamic nuclei. Exerts a significant influence on the configuration of the cardiac action potential waveform. Does not appear to play a prominent role in the processing of acute, neuropathic, or inflammatory pain. The protein is Potassium/sodium hyperpolarization-activated cyclic nucleotide-gated channel 3 (HCN3) of Homo sapiens (Human).